An 824-amino-acid chain; its full sequence is Mucosa-associated lymphoid tissue lymphoma translocation protein 1 (824 aa).

Residues Met1–Gly27 are disordered. Ser2 bears the N-acetylserine mark. The segment covering Leu11–Gly27 has biased composition (low complexity). The region spanning Arg39–Gly126 is the Death domain. Ig-like C2-type domains lie at Pro125 to Ser201 and Pro212 to Glu305. Ser135 is modified (phosphoserine). Disulfide bonds link Cys147–Cys190 and Cys248–Cys290. The interval Ile348–Asp562 is caspase-like. Positions Leu369 to Leu376 match the Nuclear export signal motif. Residues His415 and Cys464 contribute to the active site.

This sequence belongs to the peptidase C14B family. Homooligomer; forms oligomers which bind to TRAF6. Forms a complex with CARD14 and MALT1; resulting in the formation of a CBM (CARD14-BCL10-MALT1) complex. Forms a complex with CARD11 and MALT1; resulting in the formation of a CBM (CARD11-BCL10-MALT1) complex. Forms a complex with CARD9 and MALT1; resulting in the formation of a CBM (CARD9-BCL10-MALT1) complex. Highly expressed in peripheral blood mononuclear cells. Detected at lower levels in bone marrow, thymus and lymph node, and at very low levels in colon and lung.

Its subcellular location is the cytoplasm. It is found in the perinuclear region. The protein resides in the nucleus. Its function is as follows. Protease that enhances BCL10-induced activation: acts via formation of CBM complexes that channel adaptive and innate immune signaling downstream of CARD domain-containing proteins (CARD9, CARD11 and CARD14) to activate NF-kappa-B and MAP kinase p38 pathways which stimulate expression of genes encoding pro-inflammatory cytokines and chemokines. Mediates BCL10 cleavage: MALT1-dependent BCL10 cleavage plays an important role in T-cell antigen receptor-induced integrin adhesion. Involved in the induction of T helper 17 cells (Th17) differentiation. Cleaves RC3H1 and ZC3H12A in response to T-cell receptor (TCR) stimulation which releases their cooperatively repressed targets to promote Th17 cell differentiation. Also mediates cleavage of N4BP1 in T-cells following TCR-mediated activation, leading to N4BP1 inactivation. May also have ubiquitin ligase activity: binds to TRAF6, inducing TRAF6 oligomerization and activation of its ligase activity. This Homo sapiens (Human) protein is Mucosa-associated lymphoid tissue lymphoma translocation protein 1.